Reading from the N-terminus, the 148-residue chain is Large ribosomal subunit protein uL15 (148 aa).

Residues 1-61 (MELNNLKPAI…GGQMPMQRRL (61 aa)) form a disordered region. The segment covering 30–39 (TATKGHKGQK) has biased composition (basic residues).

It belongs to the universal ribosomal protein uL15 family. In terms of assembly, part of the 50S ribosomal subunit.

Binds to the 23S rRNA. The polypeptide is Large ribosomal subunit protein uL15 (Geobacter metallireducens (strain ATCC 53774 / DSM 7210 / GS-15)).